Consider the following 355-residue polypeptide: RNA binding protein fox-1 homolog 1 (355 aa).

Residues 1–123 (MNCEREQLRG…QPKRLHVSNI (123 aa)) are disordered. Positions 70-112 (QSHSEQSAADTSAHTVSGTATTDDSAPTDGQPQTQPSENTENK) are enriched in polar residues. The RRM domain maps to 116–174 (KRLHVSNIPFRFRDPDLRQMFGGFGFVTFENSADADRAREKLHGTVVEGRKIEVNNATA). Position 298 is an asymmetric dimethylarginine (Arg298).

In terms of assembly, binds to the C-terminus of ATXN2.

It is found in the nucleus. Its subcellular location is the cytoplasm. Its function is as follows. RNA-binding protein that regulates alternative splicing events by binding to 5'-UGCAUGU-3' elements. Prevents binding of U2AF2 to the 3'-splice site. Regulates alternative splicing of tissue-specific exons and of differentially spliced exons during erythropoiesis. The protein is RNA binding protein fox-1 homolog 1 (RBFOX1) of Bos taurus (Bovine).